The sequence spans 635 residues: 1-deoxy-D-xylulose-5-phosphate synthase (635 aa).

Residues H74 and 115–117 each bind thiamine diphosphate; that span reads AHS. Position 146 (D146) interacts with Mg(2+). Thiamine diphosphate contacts are provided by residues 147-148, N176, Y283, and E365; that span reads GA. Residue N176 participates in Mg(2+) binding.

The protein belongs to the transketolase family. DXPS subfamily. Homodimer. Requires Mg(2+) as cofactor. The cofactor is thiamine diphosphate.

It catalyses the reaction D-glyceraldehyde 3-phosphate + pyruvate + H(+) = 1-deoxy-D-xylulose 5-phosphate + CO2. The protein operates within metabolic intermediate biosynthesis; 1-deoxy-D-xylulose 5-phosphate biosynthesis; 1-deoxy-D-xylulose 5-phosphate from D-glyceraldehyde 3-phosphate and pyruvate: step 1/1. Catalyzes the acyloin condensation reaction between C atoms 2 and 3 of pyruvate and glyceraldehyde 3-phosphate to yield 1-deoxy-D-xylulose-5-phosphate (DXP). The chain is 1-deoxy-D-xylulose-5-phosphate synthase from Paraburkholderia xenovorans (strain LB400).